We begin with the raw amino-acid sequence, 379 residues long: ATP phosphoribosyltransferase regulatory subunit (379 aa).

The protein belongs to the class-II aminoacyl-tRNA synthetase family. HisZ subfamily. In terms of assembly, heteromultimer composed of HisG and HisZ subunits.

It localises to the cytoplasm. It functions in the pathway amino-acid biosynthesis; L-histidine biosynthesis; L-histidine from 5-phospho-alpha-D-ribose 1-diphosphate: step 1/9. Functionally, required for the first step of histidine biosynthesis. May allow the feedback regulation of ATP phosphoribosyltransferase activity by histidine. This chain is ATP phosphoribosyltransferase regulatory subunit, found in Paramagnetospirillum magneticum (strain ATCC 700264 / AMB-1) (Magnetospirillum magneticum).